A 691-amino-acid chain; its full sequence is MPSTRKLFVTTALPYANGPFHLGHLMEYIQADIWVRFQRMQGHEVNFVGADDTHGAPIMIAAEKAGKTPQQFVADIAAGRKPYLDGFHLSFDNWHSTDAPENHELARQIYRDLRDRADGSLIERRSIEQFFDPGKSMFLPDRYIVGECPRCHAKEQYGDNCEQCGSVYAPAELIDPVSALSGAKPELRSSEHFFFKLSDPRCVEFLQRWTQDGKLQPEVANKVREWFGLRSNPDGSCSEGLDDWDISRDAPYFGIEIPDAPGKYFYVWLDAPVGYLAALKNLLEKRGQNYDAYMADPALEQYHFIGKDIVTFHTLFWPAMLHLSGRKTPDNVFVHGFLTINGEKMSKSRGTGLDPLKYLSLGMNAEWLRYYLATKLSARNEDMDLGTEDFMVRVNSDLIGKYVNIASRAAGFLTKRFAGRLTSDFGAAGLALLADLHGARDTIAQWYQAREFGKATREIMLLADKVNAYVDRNKPWELAKDAANGQALHQVCSVLINAFATLTRYLSPVLPALARAAQDFVGQDMQRWDAGGAVQAIAPYQHLMQRVTPEQLAALFQPPAAAQIAAAGAQEPGGLALAPGIGIDDFDRVDLRVALIVDCAAVAGSTKLLRLTLDIGEGRQRQVFSGIASACQPADLIGKHTVMVANLAPRRLKFGVSEGMVLAASHGDEKANPGIYLLAPGPGAKPGMRVR.

The short motif at 14–24 is the 'HIGH' region element; that stretch reads PYANGPFHLGH. The Zn(2+) site is built by Cys-148, Cys-151, Cys-161, and Cys-164. The 'KMSKS' region motif lies at 344–348; sequence KMSKS. Position 347 (Lys-347) interacts with ATP. The 107-residue stretch at 585-691 folds into the tRNA-binding domain; sequence DFDRVDLRVA…PGAKPGMRVR (107 aa).

This sequence belongs to the class-I aminoacyl-tRNA synthetase family. MetG type 1 subfamily. As to quaternary structure, homodimer. The cofactor is Zn(2+).

Its subcellular location is the cytoplasm. It carries out the reaction tRNA(Met) + L-methionine + ATP = L-methionyl-tRNA(Met) + AMP + diphosphate. In terms of biological role, is required not only for elongation of protein synthesis but also for the initiation of all mRNA translation through initiator tRNA(fMet) aminoacylation. This Verminephrobacter eiseniae (strain EF01-2) protein is Methionine--tRNA ligase.